The sequence spans 354 residues: GTPase Obg (354 aa).

An Obg domain is found at 1-159; sequence MKFVDEVKIH…RDLVLELKLL (159 aa). The OBG-type G domain occupies 160–333; that stretch reads ADVGIVGYPN…LLDAVGRALF (174 aa). GTP is bound by residues 166–173, 191–195, 212–215, 283–286, and 314–316; these read GYPNAGKS, FTTLT, DIPG, TKID, and SAV. Positions 173 and 193 each coordinate Mg(2+).

The protein belongs to the TRAFAC class OBG-HflX-like GTPase superfamily. OBG GTPase family. As to quaternary structure, monomer. It depends on Mg(2+) as a cofactor.

The protein localises to the cytoplasm. Functionally, an essential GTPase which binds GTP, GDP and possibly (p)ppGpp with moderate affinity, with high nucleotide exchange rates and a fairly low GTP hydrolysis rate. Plays a role in control of the cell cycle, stress response, ribosome biogenesis and in those bacteria that undergo differentiation, in morphogenesis control. The polypeptide is GTPase Obg (Anaeromyxobacter dehalogenans (strain 2CP-1 / ATCC BAA-258)).